A 291-amino-acid chain; its full sequence is Oligopeptide transport system permease protein OppC (291 aa).

Helical transmembrane passes span 22 to 42 (VASL…PPLL), 85 to 105 (MLIG…VGAI), 116 to 136 (TLMW…IAIV), 142 to 162 (NSAN…MISS), 209 to 229 (ALNV…GFGI), and 247 to 267 (ATAF…ILVC). An ABC transmembrane type-1 domain is found at 81 to 272 (MQKSMLIGVC…LILVCANLTG (192 aa)).

This sequence belongs to the binding-protein-dependent transport system permease family. OppBC subfamily. The complex is composed of an ATP-binding protein (OppD), two transmembrane proteins (OppB and OppC) and a solute-binding protein (OppA).

The protein resides in the cell inner membrane. Functionally, part of the ABC transporter complex OppABCD involved in the uptake of oligopeptides. Responsible for the translocation of the substrate across the membrane. This Mycobacterium bovis (strain ATCC BAA-935 / AF2122/97) protein is Oligopeptide transport system permease protein OppC.